Reading from the N-terminus, the 575-residue chain is Inactive terpenoid synthase 20, chloroplastic (575 aa).

The transit peptide at 1-52 (MEAITKNGSLSQTLVHCGPKSLSSFIPVRCLRFSKNPFPKKLVVTRARTSIN) directs the protein to the chloroplast. Mg(2+) contacts are provided by Asp-332, Asp-336, Asp-474, Thr-478, and Glu-482. A DDXXD motif motif is present at residues 332–336 (DDLYD).

This sequence belongs to the terpene synthase family. Tpsa subfamily. As to expression, predominantly expressed in roots but also in leaves and stems.

The protein resides in the plastid. The protein localises to the chloroplast. Its function is as follows. Does not possess diterpene synthase activity. The protein is Inactive terpenoid synthase 20, chloroplastic of Arabidopsis thaliana (Mouse-ear cress).